Here is a 424-residue protein sequence, read N- to C-terminus: Protein CLP1 homolog (424 aa).

ATP is bound by residues Glu-19, Lys-60, and 122–127; that span reads DVGKST.

Belongs to the Clp1 family. Clp1 subfamily.

The protein resides in the nucleus. Its function is as follows. Required for endonucleolytic cleavage during polyadenylation-dependent pre-mRNA 3'-end formation. The sequence is that of Protein CLP1 homolog (cbc) from Aedes aegypti (Yellowfever mosquito).